Reading from the N-terminus, the 292-residue chain is uncharacterized protein (292 aa).

This is an uncharacterized protein from Escherichia coli (strain K12).